Consider the following 467-residue polypeptide: Dihydroorotase (467 aa).

Residues histidine 60 and histidine 62 each contribute to the Zn(2+) site. Substrate contacts are provided by residues 62–64 (HFR) and asparagine 94. Zn(2+) is bound by residues glutamate 146, histidine 180, histidine 234, and aspartate 313. Aspartate 313 is an active-site residue. Histidine 317 provides a ligand contact to substrate. A disordered region spans residues 439 to 467 (KPGRGEFLEGSGKRSEEDEEENSEETGSD). Residues 441-454 (GRGEFLEGSGKRSE) show a composition bias toward basic and acidic residues. A compositionally biased stretch (acidic residues) spans 455–467 (EDEEENSEETGSD).

It belongs to the metallo-dependent hydrolases superfamily. DHOase family. Class I DHOase subfamily. The cofactor is Zn(2+).

It catalyses the reaction (S)-dihydroorotate + H2O = N-carbamoyl-L-aspartate + H(+). Its pathway is pyrimidine metabolism; UMP biosynthesis via de novo pathway; (S)-dihydroorotate from bicarbonate: step 3/3. Its function is as follows. Catalyzes the reversible cyclization of carbamoyl aspartate to dihydroorotate. The chain is Dihydroorotase from Methanosarcina acetivorans (strain ATCC 35395 / DSM 2834 / JCM 12185 / C2A).